The chain runs to 307 residues: tRNA dimethylallyltransferase (307 aa).

16–23 (GCTAVGKT) provides a ligand contact to ATP. Residue 18-23 (TAVGKT) coordinates substrate. An interaction with substrate tRNA region spans residues 41–44 (DSLL).

This sequence belongs to the IPP transferase family. As to quaternary structure, monomer. Mg(2+) is required as a cofactor.

The catalysed reaction is adenosine(37) in tRNA + dimethylallyl diphosphate = N(6)-dimethylallyladenosine(37) in tRNA + diphosphate. Functionally, catalyzes the transfer of a dimethylallyl group onto the adenine at position 37 in tRNAs that read codons beginning with uridine, leading to the formation of N6-(dimethylallyl)adenosine (i(6)A). The polypeptide is tRNA dimethylallyltransferase (Opitutus terrae (strain DSM 11246 / JCM 15787 / PB90-1)).